Here is a 414-residue protein sequence, read N- to C-terminus: Putative F-box/kelch-repeat protein At1g20940 (414 aa).

Residues 13–65 (SSIINDLPLDLLDEILFRLEPKSMAMMRCTNNSIKSYLSDPRFGPEYPSWVRP) enclose the F-box domain. Kelch repeat units follow at residues 281–328 (LTLI…MYDG) and 331–378 (LVVR…KLTP).

As to quaternary structure, interacts with DEK3.

It participates in protein modification; protein ubiquitination. In terms of biological role, probable component of an E3 ubiquitin ligase complex. The protein is Putative F-box/kelch-repeat protein At1g20940 of Arabidopsis thaliana (Mouse-ear cress).